Reading from the N-terminus, the 39-residue chain is Photosystem II reaction center protein L (39 aa).

A helical membrane pass occupies residues 16-37 (RTSLYLGLLLVAVLGILFSSYF).

The protein belongs to the PsbL family. In terms of assembly, PSII is composed of 1 copy each of membrane proteins PsbA, PsbB, PsbC, PsbD, PsbE, PsbF, PsbH, PsbI, PsbJ, PsbK, PsbL, PsbM, PsbT, PsbX, PsbY, PsbZ, Psb30/Ycf12, peripheral proteins PsbO, CyanoQ (PsbQ), PsbU, PsbV and a large number of cofactors. It forms dimeric complexes.

It localises to the cellular thylakoid membrane. One of the components of the core complex of photosystem II (PSII). PSII is a light-driven water:plastoquinone oxidoreductase that uses light energy to abstract electrons from H(2)O, generating O(2) and a proton gradient subsequently used for ATP formation. It consists of a core antenna complex that captures photons, and an electron transfer chain that converts photonic excitation into a charge separation. This subunit is found at the monomer-monomer interface and is required for correct PSII assembly and/or dimerization. Required for PSII activity, at least in part due to its effects on PSII assembly. May make specific contact(s) with lipids. The polypeptide is Photosystem II reaction center protein L (Synechocystis sp. (strain ATCC 27184 / PCC 6803 / Kazusa)).